We begin with the raw amino-acid sequence, 243 residues long: tRNA pseudouridine synthase A (243 aa).

Asp53 acts as the Nucleophile in catalysis. Tyr111 is a binding site for substrate.

The protein belongs to the tRNA pseudouridine synthase TruA family. Homodimer.

It carries out the reaction uridine(38/39/40) in tRNA = pseudouridine(38/39/40) in tRNA. In terms of biological role, formation of pseudouridine at positions 38, 39 and 40 in the anticodon stem and loop of transfer RNAs. The protein is tRNA pseudouridine synthase A of Chlorobium phaeovibrioides (strain DSM 265 / 1930) (Prosthecochloris vibrioformis (strain DSM 265)).